The sequence spans 928 residues: Tyrosine-protein phosphatase 3 (928 aa).

Thr-75 is subject to Phosphothreonine. One can recognise a Rhodanese domain in the interval 111-232; the sequence is PDEKVLLLDV…FKILFPDHIN (122 aa). The segment at 247-307 is disordered; the sequence is KSPKTNLMNS…PRNVLSDSPM (61 aa). At Ser-248 the chain carries Phosphoserine. Composition is skewed to polar residues over residues 249–259 and 265–275; these read PKTNLMNSLHN and TATTPLSSPQM. Residues 280-289 show a composition bias toward basic and acidic residues; sequence KVPDDSRSDH. Low complexity predominate over residues 290–307; it reads SNFSSSPSPRNVLSDSPM. Phosphoserine is present on residues Ser-297 and Ser-368. 2 disordered regions span residues 467 to 487 and 672 to 713; these read LTSTSSSTIMPPKFPDVNKVQ and MRKN…NNNN. Residues 502 to 878 enclose the Tyrosine-protein phosphatase domain; that stretch reads YKSMLSLESD…IFIYDCLLFY (377 aa). Residues 672–691 are compositionally biased toward polar residues; sequence MRKNTMGTQNSSLYSAGVQG. Positions 692 to 713 are enriched in low complexity; that stretch reads NSSNYSTDNDNDNDNNNNNNNN. The Phosphocysteine intermediate role is filled by Cys-804.

Belongs to the protein-tyrosine phosphatase family. Non-receptor class subfamily. As to quaternary structure, interacts with HOG1.

It is found in the cytoplasm. It catalyses the reaction O-phospho-L-tyrosyl-[protein] + H2O = L-tyrosyl-[protein] + phosphate. Major phosphatase responsible for tyrosine dephosphorylation of MAP kinases FUS3 and HOG1 to inactivate their activity; it also has important roles, along with MSG5, in the inactivation of FUS3 following pheromone stimulation. This is Tyrosine-protein phosphatase 3 (PTP3) from Saccharomyces cerevisiae (strain ATCC 204508 / S288c) (Baker's yeast).